Reading from the N-terminus, the 604-residue chain is Choline transporter-like protein 3 (604 aa).

N-linked (GlcNAc...) asparagine glycans are attached at residues Asn-90 and Asn-103. A run of 5 helical transmembrane segments spans residues 165–185 (DTILGLCAFVFALSLAMLFTF), 195–215 (IIISLVILGLLFVCGVFWWLY), 237–257 (LAFAVITTVVTVVLLALIFTL), 286–306 (LWTFAILVFFWVLWVAVLLSL), and 330–350 (YLWWYHLIGLIWTSEFILTCQ). Residues Asn-454 and Asn-472 are each glycosylated (N-linked (GlcNAc...) asparagine). The next 2 membrane-spanning stretches (helical) occupy residues 485 to 505 (FIIFLGKVLVVCFSVFGGLMA) and 514 to 534 (VWAIPLLLVAFFAYLAAHSFL). A compositionally biased stretch (polar residues) spans 581–592 (NARSQGHKNSLP). The tract at residues 581–604 (NARSQGHKNSLPNEEGTELRPIVR) is disordered.

This sequence belongs to the CTL (choline transporter-like) family. As to expression, expressed in colon, kidney and ileum.

It is found in the membrane. This is Choline transporter-like protein 3 (Slc44a3) from Rattus norvegicus (Rat).